The chain runs to 124 residues: Small ribosomal subunit protein uS13 (124 aa).

Basic residues predominate over residues 93-117 (KNLPVRGQRTRTNARTRKGPRKTVA). The tract at residues 93-124 (KNLPVRGQRTRTNARTRKGPRKTVANKKIESK) is disordered.

The protein belongs to the universal ribosomal protein uS13 family. As to quaternary structure, part of the 30S ribosomal subunit. Forms a loose heterodimer with protein S19. Forms two bridges to the 50S subunit in the 70S ribosome.

Its function is as follows. Located at the top of the head of the 30S subunit, it contacts several helices of the 16S rRNA. In the 70S ribosome it contacts the 23S rRNA (bridge B1a) and protein L5 of the 50S subunit (bridge B1b), connecting the 2 subunits; these bridges are implicated in subunit movement. Contacts the tRNAs in the A and P-sites. This chain is Small ribosomal subunit protein uS13, found in Mycoplasma genitalium (strain ATCC 33530 / DSM 19775 / NCTC 10195 / G37) (Mycoplasmoides genitalium).